A 125-amino-acid chain; its full sequence is Small ribosomal subunit protein bS6 (125 aa).

This sequence belongs to the bacterial ribosomal protein bS6 family.

Its function is as follows. Binds together with bS18 to 16S ribosomal RNA. The chain is Small ribosomal subunit protein bS6 from Baumannia cicadellinicola subsp. Homalodisca coagulata.